The following is a 463-amino-acid chain: uncharacterized protein (463 aa).

12 helical membrane-spanning segments follow: residues 17-37 (ISLM…SASA), 40-60 (LAGP…FFIM), 97-117 (WFLW…YMGF), 122-142 (VPNW…NFLA), 153-173 (FALI…LMII), 201-221 (GVLL…MIGV), 244-264 (ILIF…WQEI), 278-298 (VGIP…ALSS), 335-355 (AVLA…VVPA), 357-377 (VFTW…AIIL), 401-421 (LFPF…ILMA), and 429-449 (AVII…GKGF).

This sequence belongs to the amino acid-polyamine-organocation (APC) superfamily.

Its subcellular location is the cell membrane. This is an uncharacterized protein from Bacillus subtilis (strain 168).